A 289-amino-acid chain; its full sequence is 5'-adenylylsulfate reductase-like 7 (289 aa).

A signal peptide spans 1-23 (MNLWVSIFLVSAIAGSCLPSGFA). Positions 37-157 (SVIEQKCPRS…LIQFYKETTG (121 aa)) constitute a Thioredoxin domain. 2 N-linked (GlcNAc...) asparagine glycosylation sites follow: N132 and N184. The helical transmembrane segment at 198-218 (MVLALMFLSLKLAILIFPIMG) threads the bilayer.

The protein localises to the membrane. The chain is 5'-adenylylsulfate reductase-like 7 (APRL7) from Arabidopsis thaliana (Mouse-ear cress).